A 350-amino-acid polypeptide reads, in one-letter code: MKLEQITEELKSQQADAAWITTPLNIFYFTGYLSDPHERLLALLIKSNGEQVLFCPQLEVEEVRASPFNGEVIGYLDTENALDKYDIKFNKLLVESAHLTLQRQRELIDAFGVQSFGDIDQTIKTLRNIKSDSEIEKIKKACELADKCIEIGVSFLKEGVTERQVVNHIEYEIKAYGVNEMSFDTMVLFGDHAASPHGTPGDRQLKKDEFVLFDLGVIYENYCSDMTRTVKFGTPDAKAQEIYDVVLKAEKEAIAAIKPGVTIKDVDDIARNIITEAGYGEYFPHRLGHGLGLEEHEYQDVSSTNTNEFKAGMVITVEPGIYVPGVAGVRIEDDILVTENGNESLTGYEK.

D214, D225, H289, E318, and E332 together coordinate Mn(2+).

This sequence belongs to the peptidase M24B family. Requires Mn(2+) as cofactor.

This is an uncharacterized protein from Staphylococcus saprophyticus subsp. saprophyticus (strain ATCC 15305 / DSM 20229 / NCIMB 8711 / NCTC 7292 / S-41).